A 342-amino-acid chain; its full sequence is Fructose-1,6-bisphosphatase class 1 (342 aa).

The Mg(2+) site is built by Glu97, Asp119, Leu121, and Asp122. Residues 122-125, Asn215, Tyr247, and Lys280 contribute to the substrate site; that span reads DGSS. Glu286 lines the Mg(2+) pocket.

Belongs to the FBPase class 1 family. As to quaternary structure, homotetramer. The cofactor is Mg(2+).

It localises to the cytoplasm. It catalyses the reaction beta-D-fructose 1,6-bisphosphate + H2O = beta-D-fructose 6-phosphate + phosphate. It functions in the pathway carbohydrate biosynthesis; gluconeogenesis. The sequence is that of Fructose-1,6-bisphosphatase class 1 from Leptospira interrogans serogroup Icterohaemorrhagiae serovar copenhageni (strain Fiocruz L1-130).